A 221-amino-acid chain; its full sequence is uncharacterized protein (221 aa).

A run of 5 helical transmembrane segments spans residues 2 to 22 (FIAK…FFFV), 34 to 54 (LLTL…LAQA), 97 to 117 (AYGL…SNVI), 131 to 151 (ALDQ…FMGI), and 177 to 197 (ILWP…LQVI).

The protein belongs to the peroxisomal membrane protein PXMP2/4 family.

It localises to the membrane. This is an uncharacterized protein from Schizosaccharomyces pombe (strain 972 / ATCC 24843) (Fission yeast).